The chain runs to 412 residues: Serine hydroxymethyltransferase (412 aa).

(6S)-5,6,7,8-tetrahydrofolate-binding positions include Leu-116 and 120-122 (GHL). Lys-225 bears the N6-(pyridoxal phosphate)lysine mark. Residues Glu-241 and 350–352 (SPF) contribute to the (6S)-5,6,7,8-tetrahydrofolate site.

This sequence belongs to the SHMT family. As to quaternary structure, homodimer. Pyridoxal 5'-phosphate is required as a cofactor.

It localises to the cytoplasm. The enzyme catalyses (6R)-5,10-methylene-5,6,7,8-tetrahydrofolate + glycine + H2O = (6S)-5,6,7,8-tetrahydrofolate + L-serine. It participates in one-carbon metabolism; tetrahydrofolate interconversion. It functions in the pathway amino-acid biosynthesis; glycine biosynthesis; glycine from L-serine: step 1/1. In terms of biological role, catalyzes the reversible interconversion of serine and glycine with tetrahydrofolate (THF) serving as the one-carbon carrier. This reaction serves as the major source of one-carbon groups required for the biosynthesis of purines, thymidylate, methionine, and other important biomolecules. Also exhibits THF-independent aldolase activity toward beta-hydroxyamino acids, producing glycine and aldehydes, via a retro-aldol mechanism. The protein is Serine hydroxymethyltransferase of Enterococcus faecalis (strain ATCC 700802 / V583).